The following is a 189-amino-acid chain: Ribosome-recycling factor (189 aa).

This sequence belongs to the RRF family.

It localises to the cytoplasm. Responsible for the release of ribosomes from messenger RNA at the termination of protein biosynthesis. May increase the efficiency of translation by recycling ribosomes from one round of translation to another. This Salinibacter ruber (strain DSM 13855 / M31) protein is Ribosome-recycling factor.